We begin with the raw amino-acid sequence, 369 residues long: Anhydro-N-acetylmuramic acid kinase (369 aa).

An ATP-binding site is contributed by 12–19; it reads GTSLDGVD.

This sequence belongs to the anhydro-N-acetylmuramic acid kinase family.

It catalyses the reaction 1,6-anhydro-N-acetyl-beta-muramate + ATP + H2O = N-acetyl-D-muramate 6-phosphate + ADP + H(+). It participates in amino-sugar metabolism; 1,6-anhydro-N-acetylmuramate degradation. The protein operates within cell wall biogenesis; peptidoglycan recycling. Catalyzes the specific phosphorylation of 1,6-anhydro-N-acetylmuramic acid (anhMurNAc) with the simultaneous cleavage of the 1,6-anhydro ring, generating MurNAc-6-P. Is required for the utilization of anhMurNAc either imported from the medium or derived from its own cell wall murein, and thus plays a role in cell wall recycling. This Escherichia coli O6:K15:H31 (strain 536 / UPEC) protein is Anhydro-N-acetylmuramic acid kinase.